The primary structure comprises 211 residues: Probable septum site-determining protein MinC (211 aa).

The protein belongs to the MinC family. Interacts with MinD and FtsZ.

Cell division inhibitor that blocks the formation of polar Z ring septums. Rapidly oscillates between the poles of the cell to destabilize FtsZ filaments that have formed before they mature into polar Z rings. Prevents FtsZ polymerization. The chain is Probable septum site-determining protein MinC from Clostridium perfringens (strain 13 / Type A).